The primary structure comprises 185 residues: Coiled-coil domain-containing protein 32 (185 aa).

Residues 78 to 98 (LASLEKKLRRIKGLNQEVTSK) are a coiled coil. The tract at residues 159 to 185 (IPPESQVEKPVAEDEPAAGDKPAAAEQ) is disordered.

As to quaternary structure, interacts with AP2S1; the interaction is direct and mediates association with adaptor protein complex 2 (AP-2).

It is found in the membrane. Its subcellular location is the coated pit. Regulates clathrin-mediated endocytsois of cargos such as transferrin probably through the association and modulation of adaptor protein complex 2 (AP-2). Has a role in ciliogenesis. Required for proper cephalic and left/right axis development. The chain is Coiled-coil domain-containing protein 32 from Homo sapiens (Human).